The sequence spans 229 residues: Heptaprenylglyceryl phosphate synthase (229 aa).

K12 lines the sn-glycerol 1-phosphate pocket. Mg(2+) contacts are provided by D14 and S40. Sn-glycerol 1-phosphate is bound by residues 159 to 164 (YLEYSG), G189, and 209 to 210 (GN).

Belongs to the GGGP/HepGP synthase family. Group I subfamily. In terms of assembly, homodimer. Requires Mg(2+) as cofactor.

It carries out the reaction sn-glycerol 1-phosphate + all-trans-heptaprenyl diphosphate = 3-heptaprenyl-sn-glycero-1-phosphate + diphosphate. It participates in membrane lipid metabolism; glycerophospholipid metabolism. Its function is as follows. Prenyltransferase that catalyzes in vivo the transfer of the heptaprenyl moiety of heptaprenyl pyrophosphate (HepPP; 35 carbon atoms) to the C3 hydroxyl of sn-glycerol-1-phosphate (G1P), producing heptaprenylglyceryl phosphate (HepGP). This reaction is an ether-bond-formation step in the biosynthesis of archaea-type G1P-based membrane lipids found in Bacillales. This Bacillus mycoides (strain KBAB4) (Bacillus weihenstephanensis) protein is Heptaprenylglyceryl phosphate synthase.